The sequence spans 1306 residues: Synergin gamma (1306 aa).

Residues 113–153 (MQKQFAEEQQKRFEQQQKLLEEERKRRQFEEQKQKLRLLSS) adopt a coiled-coil conformation. Disordered regions lie at residues 176 to 196 (GFSRDAKMHPTPASHPKKQGP) and 252 to 285 (SGPASAEAEKTSDQTLSKEESGVGVFPSQDPAQS). Residues 258–272 (EAEKTSDQTLSKEES) show a composition bias toward basic and acidic residues. The region spanning 293–404 (NESLVPDAYK…TPVSQPTAMP (112 aa)) is the EH domain. A DFXDF motif 1 motif is present at residues 455–459 (DFQDF). The segment at 460 to 494 (QDASKSGSIDDSFTDFQEMPASSKTSNSQHGNSAP) is disordered. Phosphoserine is present on Ser471. Residue Lys509 is modified to N6-acetyllysine. The interaction with AP1G1 stretch occupies residues 514–778 (KGISTDKPSE…ADFHSSKFSS (265 aa)). A disordered region spans residues 559 to 601 (STGTDDGFTDFKTADSVSPLEPPTKDTFPSAFASGAAQQTQTQ). At Ser576 the chain carries Phosphoserine. The tract at residues 661–673 (LADDFGEFNLFGE) is interaction with AP1G1, AP1G2 and GGA1. The DFXDF motif 2 signature appears at 685–689 (DFADF). Residues 697 to 730 (ISSEPKASDKYEALREEVSPSPLSSSTVEGAQHP) are disordered. Residues 702 to 714 (KASDKYEALREEV) are compositionally biased toward basic and acidic residues. Phosphoserine is present on Ser715. Lys736 is subject to N6-acetyllysine. 2 positions are modified to phosphoserine: Ser744 and Ser764. Positions 767–771 (DFADF) match the DFXDF motif 3 motif. 12 positions are modified to phosphoserine: Ser804, Ser844, Ser847, Ser901, Ser911, Ser927, Ser974, Ser998, Ser1065, Ser1067, Ser1079, and Ser1090. Disordered regions lie at residues 986–1016 (PTVDRSQETSCPSPASSVASHETPKEGADDF) and 1065–1090 (SLSLGDKEISRSSPSPALEQPFRDRS). Over residues 993–1005 (ETSCPSPASSVAS) the composition is skewed to polar residues. Thr1092 carries the post-translational modification Phosphothreonine.

Self-associates. Interacts with GGA1 (via GAE domain). Interacts with GGA2 and GGA3. Interacts with AP1G1 (via GAE domain), a subunit of adapter protein complex AP-1. Interacts with AP1G2 (via GAE domain) a subunit of adapter protein complex AP-1. Component of the aftiphilin/p200/gamma-synergin complex, at least composed of AFTPH/aftiphilin, HEATR5B/p200a and SYNRG/gamma-synergin, which plays a role in the AP1G1/AP-1-mediated trafficking of transferrin from early to recycling endosomes. Within the complex interacts with AFTPH/aftiphilin and HEATR5B/p200a; the interactions are direct. Interacts (via EH domain) with SCAMP1.

The protein resides in the cytoplasm. The protein localises to the cytosol. Its subcellular location is the golgi apparatus. It localises to the trans-Golgi network membrane. It is found in the perinuclear region. The protein resides in the cytoplasmic vesicle. The protein localises to the clathrin-coated vesicle. In terms of biological role, plays a role in endocytosis and/or membrane trafficking at the trans-Golgi network (TGN). May act by linking the adapter protein complex AP-1 to other proteins. Component of clathrin-coated vesicles. Component of the aftiphilin/p200/gamma-synergin complex, which plays roles in AP1G1/AP-1-mediated protein trafficking including the trafficking of transferrin from early to recycling endosomes, and the membrane trafficking of furin and the lysosomal enzyme cathepsin D between the trans-Golgi network (TGN) and endosomes. The chain is Synergin gamma (Synrg) from Mus musculus (Mouse).